Here is a 310-residue protein sequence, read N- to C-terminus: ER-derived vesicles protein ERV29 (310 aa).

The Cytoplasmic portion of the chain corresponds to 1–108 (MSYRGPIGNF…YLNKWKHYPY (108 aa)). A disordered region spans residues 11-31 (GGMPMSSSQGPYSGGAQFRSN). A helical transmembrane segment spans residues 109–129 (FFVVVFLVVVTVSMLIGASLL). Residues 130–137 (VLRKQTNY) lie on the Lumenal side of the membrane. The helical transmembrane segment at 138 to 158 (ATGVLCACVISQALVYGLFTG) threads the bilayer. Residues 159–209 (SSFVLRNFSVIGGLLIAFSDSIVQNKTTFGMLPELNSKNDKAKGYLLFAGR) lie on the Cytoplasmic side of the membrane. Residues 210–230 (ILIVLMFIAFTFSKSWFTVVL) traverse the membrane as a helical segment. At 231–245 (TIIGTICFAIGYKTK) the chain is on the lumenal side. Residues 246-266 (FASIMLGLILTFYNITLNNYW) form a helical membrane-spanning segment. Over 267–310 (FYNNTKRDFLKYEFYQNLSIIGGLLLVTNTGAGELSVDEKKKIY) the chain is Cytoplasmic. The Di-lysine motif signature appears at 307-310 (KKIY).

This sequence belongs to the SURF4 family.

It localises to the endoplasmic reticulum membrane. Functionally, constituent of COPII-coated endoplasmic reticulum-derived transport vesicles. Required for efficient transport of a subset of secretory proteins to the Golgi. The C-terminal di-lysine motif is required for exit from the endoplasmic reticulum. Required directly for packaging glycosylated pro-alpha-factor into COPII vesicles. Facilitates retrograde transport from the Golgi to the endoplasmic reticulum. The chain is ER-derived vesicles protein ERV29 (ERV29) from Saccharomyces cerevisiae (strain ATCC 204508 / S288c) (Baker's yeast).